The chain runs to 186 residues: MAQVELILLQRVEHLGQMGEVVKVKPGYARNFLLPQAKAVRATKQNRERFERERAHLEAQNLKRREEAERVAERVAGLTVTLIRQASDAGSLYGSVTSRDIADACGEASLGITRSQVLLVHPIKTLGLATVRVALHPEVLIDVVVNVARSPEEAEKQARGEAIMREESEYELETGEEVAEGPEQTA.

Over residues 151–167 (PEEAEKQARGEAIMREE) the composition is skewed to basic and acidic residues. Positions 151–186 (PEEAEKQARGEAIMREESEYELETGEEVAEGPEQTA) are disordered. Residues 168–180 (SEYELETGEEVAE) are compositionally biased toward acidic residues.

Belongs to the bacterial ribosomal protein bL9 family.

Its function is as follows. Binds to the 23S rRNA. This is Large ribosomal subunit protein bL9 from Acidiphilium cryptum (strain JF-5).